A 512-amino-acid chain; its full sequence is Hyaluronidase PH-20 (512 aa).

The signal sequence occupies residues 1 to 35 (MGELRFKHLFWGSFVESGGTFQTVLIFLLIPCSLT). An N-linked (GlcNAc...) asparagine glycan is attached at Asn46. Disulfide bonds link Cys60/Cys351 and Cys223/Cys237. Glu147 (proton donor) is an active-site residue. Residue Asn165 is glycosylated (N-linked (GlcNAc...) asparagine). N-linked (GlcNAc...) asparagine glycans are attached at residues Asn293 and Asn368. Disulfide bonds link Cys376/Cys387, Cys381/Cys435, and Cys437/Cys464.

The protein belongs to the glycosyl hydrolase 56 family.

It localises to the cell membrane. The enzyme catalyses Random hydrolysis of (1-&gt;4)-linkages between N-acetyl-beta-D-glucosamine and D-glucuronate residues in hyaluronate.. Its function is as follows. Involved in sperm-egg adhesion. Upon fertilization sperm must first penetrate a layer of cumulus cells that surrounds the egg before reaching the zona pellucida. The cumulus cells are embedded in a matrix containing hyaluronic acid which is formed prior to ovulation. This protein aids in penetrating the layer of cumulus cells by digesting hyaluronic acid. This is Hyaluronidase PH-20 (Spam1) from Mus musculus (Mouse).